A 444-amino-acid chain; its full sequence is Acetyl-CoA--deacetylcephalosporin C acetyltransferase (444 aa).

Residues 1–71 constitute a propeptide that is removed on maturation; the sequence is MLPSAQVARL…PQIANRFEAS (71 aa). Residues 112–425 form the AB hydrolase-1 domain; sequence VIVCHTLTSS…DTNEGHDFFV (314 aa). Residues Ser208 and His421 contribute to the active site.

It belongs to the AB hydrolase superfamily. MetX family. Heterodimer of chain I and chain II.

It catalyses the reaction deacetylcephalosporin C + acetyl-CoA = cephalosporin C + CoA. The protein operates within antibiotic biosynthesis; cephalosporin C biosynthesis. Its function is as follows. Catalyzes the conversion of deacetylcephalosporin C to cephalosporin C. This chain is Acetyl-CoA--deacetylcephalosporin C acetyltransferase (CEFG), found in Hapsidospora chrysogena (Acremonium chrysogenum).